Consider the following 577-residue polypeptide: 2-hydroxyacyl-CoA lyase (577 aa).

A thiamine diphosphate-binding site is contributed by glutamate 59. A thiamine pyrophosphate binding region spans residues 412-493 (TMDVGRAVLV…VIVFNNNGVY (82 aa)). Mg(2+)-binding residues include aspartate 462 and asparagine 489.

This sequence belongs to the TPP enzyme family. As to quaternary structure, homotetramer. Mg(2+) is required as a cofactor. Requires thiamine diphosphate as cofactor.

It catalyses the reaction an (R)-2-hydroxy-long-chain-fatty acyl-CoA = a long-chain fatty aldehyde + formyl-CoA. The enzyme catalyses a 2-hydroxy-3-methyl fatty acyl-CoA = a 2-methyl-branched fatty aldehyde + formyl-CoA. In terms of biological role, catalyzes a carbon-carbon cleavage reaction; cleaves a 2-hydroxy-3-methylacyl-CoA into formyl-CoA and a 2-methyl-branched fatty aldehyde. The polypeptide is 2-hydroxyacyl-CoA lyase (Oryza sativa subsp. japonica (Rice)).